Here is a 2615-residue protein sequence, read N- to C-terminus: Polycystin-1-like protein 1 (2615 aa).

The Extracellular portion of the chain corresponds to 1 to 1524 (MDVDEDQHAV…VSSISEFQSH (1524 aa)). Residues 17–93 (IQANPELCVS…GTNSFSNPPP (77 aa)) form a disordered region. Residues Asn-224, Asn-297, Asn-306, Asn-390, Asn-440, Asn-534, and Asn-619 are each glycosylated (N-linked (GlcNAc...) asparagine). PKD domains follow at residues 291 to 373 (SVSV…VQKR) and 375 to 456 (MANR…VREP). Positions 457–1349 (CQPPPVKNMG…GEEDYLHKRN (893 aa)) constitute an REJ domain. Residues 749–815 (SSKSDLPSNL…GEPMEEYSSL (67 aa)) are disordered. The segment covering 778-789 (ALSNLGSISAES) has biased composition (polar residues). The region spanning 1364–1512 (RFTGLSENSQ…SVLRRKLNAT (149 aa)) is the GAIN-B domain. Asn-1458 carries an N-linked (GlcNAc...) asparagine glycan. Cys-1468 and Cys-1494 form a disulfide bridge. The tract at residues 1468-1512 (CVFWDKTEWRSEGPYPQPGSSPEKVNCSYHHLAPVSVLRRKLNAT) is GPS. Asn-1510 is a glycosylation site (N-linked (GlcNAc...) asparagine). Residues 1525–1545 (PHNLLPGIFSAFLLVLYGILV) form a helical membrane-spanning segment. Over 1546-1732 (SKSRYVDCHE…PPSRSYLHTQ (187 aa)) the chain is Cytoplasmic. The region spanning 1573-1690 (QLYAVVIDTG…LGGHVLREFF (118 aa)) is the PLAT domain. The chain crosses the membrane as a helical span at residues 1733–1753 (RLAVSFCLLCVYSCLTALVTV). Over 1754–1772 (RDHQQRPLDVGPTAITLEP) the chain is Extracellular. A helical transmembrane segment spans residues 1773–1793 (FCMALLCTLLACPVAQLLSLL). The Cytoplasmic portion of the chain corresponds to 1794–1905 (FRCSKEARGD…ELGSQKSRVC (112 aa)). The interval 1807-1840 (STQWPLRGVKTETPQGHDSSGRPDSRQPSPHPTS) is disordered. A helical transmembrane segment spans residues 1906–1926 (LLWSSSVAWAISGSASLACGL). Residues 1927–1950 (GTGFLGYWFVPAQCMWWLYLLLLS) lie on the Extracellular side of the membrane. The chain crosses the membrane as a helical span at residues 1951-1971 (LVCCAFITQPLMICLAALVFA). Over 1972 to 2057 (WKRKHDSKFF…ERLRRESIMQ (86 aa)) the chain is Cytoplasmic. The helical transmembrane segment at 2058-2078 (AALRDMTTHSIMLLLLLFIAY) threads the bilayer. At 2079-2288 (GRFCPGEISL…IFYSDSALKY (210 aa)) the chain is on the extracellular side. A helical membrane pass occupies residues 2289-2309 (LLMLSELLFLVLNVIHLCFQL). At 2310–2332 (WGMTTKGILSYWRKPRHWLELSM) the chain is on the cytoplasmic side. A helical transmembrane segment spans residues 2333-2353 (VGVAIAYYAASGHLTTLAVNI). Topologically, residues 2354–2379 (TDQFHKGLYQRLVDIGLMVSWHQRAR) are extracellular. A helical membrane pass occupies residues 2380–2400 (CLQGILLFLWMLKYVHLLSSL). Residues 2401 to 2405 (STMTP) lie on the Cytoplasmic side of the membrane. A helical transmembrane segment spans residues 2406-2426 (FSAVTCFPLFRVLLVGALLLA). Topologically, residues 2427–2483 (AHYHSRWFLLFTGTLSHGTSAEAFPGLLLQFPGRSKKDSWHNCLKSDHGVMRCYYGT) are extracellular. Residues 2484–2504 (LFLLLATLGFRMLRATFLTVF) traverse the membrane as a helical segment. Over 2505 to 2615 (QNRKSSHRKP…VSGPLAAESE (111 aa)) the chain is Cytoplasmic. The segment at 2589 to 2615 (RAGDSPPVGSSEYQATGVSGPLAAESE) is disordered.

The protein belongs to the polycystin family. Heterodimer. Interacts with PKD2 to form a calcium channel. Interacts with PKD2L1; to form ciliary calcium channel. May interact with GNA12, GNAS, GNAI1 and GNAI2. In terms of tissue distribution, in testis, strong expression in Leydig cells, low level in seminal ducts, myoid cells and tunica vaginalis. Other tissues, including adrenal gland and heart myocardium, also show low expression. In embryo, highly expressed in the node.

It is found in the cell projection. The protein localises to the cilium membrane. Its function is as follows. Component of a calcium-permeant ion channel formed by PKD1L2 and PKD1L1 in primary cilia, where it controls cilium calcium concentration, without affecting cytoplasmic calcium concentration, and regulates sonic hedgehog/SHH signaling and GLI2 transcription. The PKD1L1:PKD2L1 channel complex is mechanosensitive only at high pressures and is highly temperature sensitive. Also involved in left/right axis specification downstream of nodal flow by forming a complex with PKD2 in cilia to facilitate flow detection in left/right patterning. May function as a G-protein-coupled receptor. The chain is Polycystin-1-like protein 1 from Mus musculus (Mouse).